A 322-amino-acid polypeptide reads, in one-letter code: Autophagy protein 5 (322 aa).

Lys158 participates in a covalent cross-link: Glycyl lysine isopeptide (Lys-Gly) (interchain with G-Cter in atg12).

This sequence belongs to the ATG5 family. Conjugated with atg12. Post-translationally, conjugated to atg12; which is essential for autophagy.

The protein localises to the preautophagosomal structure membrane. Its function is as follows. Involved in cytoplasm to vacuole transport (Cvt) and autophagic vesicle formation. Autophagy is essential for maintenance of amino acid levels and protein synthesis under nitrogen starvation. Required for selective autophagic degradation of the nucleus (nucleophagy). Also required for mitophagy, which eliminates defective or superfluous mitochondria in order to fulfill cellular energy requirements and prevent excess ROS production. Conjugation with atg12, through a ubiquitin-like conjugating system involving atg7 as an E1-like activating enzyme and atg10 as an E2-like conjugating enzyme, is essential for its function. The atg12-atg5 conjugate acts as an E3-like enzyme which is required for lipidation of atg8 and atg8 association to the vesicle membranes. The polypeptide is Autophagy protein 5 (atg5) (Aspergillus oryzae (strain ATCC 42149 / RIB 40) (Yellow koji mold)).